The following is an 862-amino-acid chain: Alanine--tRNA ligase (862 aa).

Positions 552, 556, 653, and 657 each coordinate Zn(2+).

Belongs to the class-II aminoacyl-tRNA synthetase family. Requires Zn(2+) as cofactor.

It localises to the cytoplasm. It catalyses the reaction tRNA(Ala) + L-alanine + ATP = L-alanyl-tRNA(Ala) + AMP + diphosphate. Its function is as follows. Catalyzes the attachment of alanine to tRNA(Ala) in a two-step reaction: alanine is first activated by ATP to form Ala-AMP and then transferred to the acceptor end of tRNA(Ala). Also edits incorrectly charged Ser-tRNA(Ala) and Gly-tRNA(Ala) via its editing domain. This Nitrosospira multiformis (strain ATCC 25196 / NCIMB 11849 / C 71) protein is Alanine--tRNA ligase.